The sequence spans 343 residues: Ribosomal RNA-processing protein 8 (343 aa).

Residues 1 to 123 (MGKKRKITDE…NDDVAAAPEE (123 aa)) are disordered. A compositionally biased stretch (basic and acidic residues) spans 7 to 33 (ITDEKDAQHVPAEKREKVENWLKKSTE). 2 stretches are compositionally biased toward basic residues: residues 45 to 59 (KKKRPWRNKVRKLAA) and 89 to 101 (KKKRKRGPKKKKF). A compositionally biased stretch (acidic residues) spans 112–123 (TENDDVAAAPEE). His-169, Gly-204, Asp-224, Asp-236, Met-237, and Cys-253 together coordinate S-adenosyl-L-methionine.

This sequence belongs to the methyltransferase superfamily. RRP8 family.

The protein resides in the nucleus. The protein localises to the nucleolus. Functionally, probable methyltransferase required to silence rDNA. Involved in regulation of antisense ribosomal siRNA production. Required for the N1-methyladenosine modification of 26S rRNAs. In Caenorhabditis elegans, this protein is Ribosomal RNA-processing protein 8 (rrp-8).